A 1475-amino-acid polypeptide reads, in one-letter code: ABC transporter G family member 15 (1475 aa).

A compositionally biased stretch (basic and acidic residues) spans 1–10; that stretch reads MDSNENKKNG. Disordered regions lie at residues 1 to 40 and 75 to 94; these read MDSNENKKNGGDSLELNIINNNNDNNNNNDNNNNSTEEHI and NIKNDIEAPPSGEFEPGGGA. Low complexity predominate over residues 17–34; sequence NIINNNNDNNNNNDNNNN. The stretch at 25–67 forms a coiled coil; the sequence is NNNNNDNNNNSTEEHIESVEQSIKEFNNVANELETEFRDYLVE. In terms of domain architecture, ABC transporter 1 spans 155 to 404; sequence LNVKNWFKKS…FIDMGFECEP (250 aa). The region spanning 507-753 is the ABC transmembrane type-2 1 domain; sequence WGDKFSLISR…FTGERYLEKS (247 aa). 5 helical membrane passes run 596 to 616, 623 to 641, 653 to 673, 680 to 699, and 770 to 790; these read IPIIMIQVFLFSIVTYFMFGL, FFINCFTLIGFTLATNNLY, IGQNIMNVLFLTMMTFTSYII, VWFGWYHYCNPFSFAFRALM, and ICIVYGFWILFIICNCIVLNI. The ABC transporter 2 domain maps to 842–1087; it reads FTWQHMYYSV…LTSYFQRHGV (246 aa). 879–886 serves as a coordination point for ATP; it reads GSSGAGKT. The next 6 membrane-spanning stretches (helical) occupy residues 1180-1200, 1216-1236, 1256-1276, 1293-1313, 1323-1343, and 1449-1469; these read GYSYGTFIQSALVGLINGWTF, FIFNVTMLGILLMFLVLPQFI, FALSIIVVELPFVLVSGTIFF, FFFWLIFMLFLFYCVGFGQAI, ALNLLPVLIIFLFLFCGVLVI, and FGIIAGYFVLNIFLVVLFVFL. In terms of domain architecture, ABC transmembrane type-2 2 spans 1180–1404; sequence GYSYGTFIQS…TCSDYAFEFL (225 aa).

It belongs to the ABC transporter superfamily. ABCG family. PDR (TC 3.A.1.205) subfamily.

The protein resides in the membrane. The chain is ABC transporter G family member 15 (abcG15) from Dictyostelium discoideum (Social amoeba).